Consider the following 164-residue polypeptide: MPLLDSFKVDHTKMPAPAVRLAKVMKTPKGDDISVFDLRFCVPNKDIMSEKGTHTLEHLFAGFMREHLNSNAVEIIDISPMGCRTGFYMSLIGTPDEKSVVKAWENSMQDVLKVKSQEDIPELNIYQCGSCKLHSLDEAKQIAQKVLNSGIGVMNNAELKLENL.

Fe cation-binding residues include H54, H58, and C128.

Belongs to the LuxS family. In terms of assembly, homodimer. Fe cation is required as a cofactor.

It carries out the reaction S-(5-deoxy-D-ribos-5-yl)-L-homocysteine = (S)-4,5-dihydroxypentane-2,3-dione + L-homocysteine. Functionally, involved in the synthesis of autoinducer 2 (AI-2) which is secreted by bacteria and is used to communicate both the cell density and the metabolic potential of the environment. The regulation of gene expression in response to changes in cell density is called quorum sensing. Catalyzes the transformation of S-ribosylhomocysteine (RHC) to homocysteine (HC) and 4,5-dihydroxy-2,3-pentadione (DPD). This is S-ribosylhomocysteine lyase from Campylobacter jejuni subsp. doylei (strain ATCC BAA-1458 / RM4099 / 269.97).